A 473-amino-acid chain; its full sequence is UDP-glycosyltransferase 71A27 (473 aa).

The active-site Proton acceptor is the H15. H15 contributes to the an anthocyanidin binding site. The active-site Charge relay is the D117. Residues A345, Q347, H362, W365, N366, S367, and E370 each coordinate UDP-alpha-D-glucose. G385 provides a ligand contact to an anthocyanidin. UDP-alpha-D-glucose-binding residues include E386 and Q387.

It belongs to the UDP-glycosyltransferase family.

It catalyses the reaction (20S)-protopanaxadiol + UDP-alpha-D-glucose = (20S)-ginsenoside C-K + UDP + H(+). It functions in the pathway secondary metabolite biosynthesis; terpenoid biosynthesis. Component of the triterpene saponins (e.g. PPD-type ginsenosides or panaxosides) biosynthetic pathways. Glycosyltransferase that catalyzes the biosynthesis of compound K from protopanaxadiol (PPD). This Panax ginseng (Korean ginseng) protein is UDP-glycosyltransferase 71A27.